The following is a 203-amino-acid chain: Protein S40-6 (203 aa).

The tract at residues 1 to 33 (MAKGRKPTTMNRSDRYLGSYTYGDSHGNSVTDE) is disordered.

Belongs to the senescence regulator S40 family.

It localises to the cytoplasm. This is Protein S40-6 from Arabidopsis thaliana (Mouse-ear cress).